Reading from the N-terminus, the 252-residue chain is GTP cyclohydrolase 1 type 2 homolog (252 aa).

A divalent metal cation is bound by residues histidine 63, histidine 64, aspartate 101, histidine 220, and glutamate 224.

This sequence belongs to the GTP cyclohydrolase I type 2/NIF3 family. As to quaternary structure, homohexamer.

This is GTP cyclohydrolase 1 type 2 homolog from Vibrio cholerae serotype O1 (strain ATCC 39315 / El Tor Inaba N16961).